Reading from the N-terminus, the 205-residue chain is Protein-L-isoaspartate O-methyltransferase (205 aa).

The active site involves serine 56.

Belongs to the methyltransferase superfamily. L-isoaspartyl/D-aspartyl protein methyltransferase family.

It localises to the cytoplasm. It catalyses the reaction [protein]-L-isoaspartate + S-adenosyl-L-methionine = [protein]-L-isoaspartate alpha-methyl ester + S-adenosyl-L-homocysteine. In terms of biological role, catalyzes the methyl esterification of L-isoaspartyl residues in peptides and proteins that result from spontaneous decomposition of normal L-aspartyl and L-asparaginyl residues. It plays a role in the repair and/or degradation of damaged proteins. The protein is Protein-L-isoaspartate O-methyltransferase of Pyrobaculum aerophilum (strain ATCC 51768 / DSM 7523 / JCM 9630 / CIP 104966 / NBRC 100827 / IM2).